The primary structure comprises 140 residues: MKESEGIDVKLMDIVRFDKNGLIPAITQDYETGKVLMLAYMNKESLEVTLKERKACYWSRSRQELWLKGATSGNFQEVMQISIDCDADAILLKVKQKGGACHVGYYSCFYRQVENDNSSLSICDKLVFDAEEVYGKSNKK.

D84 is a Mg(2+) binding site. Residue C85 participates in Zn(2+) binding. D86 and D88 together coordinate Mg(2+). Zn(2+) is bound by residues C101 and C108.

This sequence belongs to the PRA-CH family. In terms of assembly, homodimer. Requires Mg(2+) as cofactor. Zn(2+) is required as a cofactor.

It localises to the cytoplasm. The catalysed reaction is 1-(5-phospho-beta-D-ribosyl)-5'-AMP + H2O = 1-(5-phospho-beta-D-ribosyl)-5-[(5-phospho-beta-D-ribosylamino)methylideneamino]imidazole-4-carboxamide. It functions in the pathway amino-acid biosynthesis; L-histidine biosynthesis; L-histidine from 5-phospho-alpha-D-ribose 1-diphosphate: step 3/9. Functionally, catalyzes the hydrolysis of the adenine ring of phosphoribosyl-AMP. This is Phosphoribosyl-AMP cyclohydrolase from Chloroherpeton thalassium (strain ATCC 35110 / GB-78).